A 283-amino-acid chain; its full sequence is uncharacterized protein (283 aa).

This is an uncharacterized protein from Halobacterium salinarum (strain ATCC 700922 / JCM 11081 / NRC-1) (Halobacterium halobium).